Here is a 110-residue protein sequence, read N- to C-terminus: Large ribosomal subunit protein P2C (110 aa).

A disordered region spans residues 83–110 (APAAEEAAKEEAKEEEESDEDMGFGLFD). A compositionally biased stretch (acidic residues) spans 95-104 (KEEEESDEDM). S100 carries the phosphoserine modification.

It belongs to the eukaryotic ribosomal protein P1/P2 family. In terms of assembly, component of the large ribosomal subunit (LSU). Mature yeast ribosomes consist of a small (40S) and a large (60S) subunit. The 40S small subunit contains 1 molecule of ribosomal RNA (18S rRNA) and at least 33 different proteins. The large 60S subunit contains 3 rRNA molecules (25S, 5.8S and 5S rRNA) and at least 46 different proteins. The acidic ribosomal P-proteins form the stalk structure of the 60S subunit. They are organized as a pentameric complex in which uL10/P0 interacts with 2 heterodimers of P1 and P2 proteins.

The protein resides in the cytoplasm. In terms of biological role, component of the ribosome, a large ribonucleoprotein complex responsible for the synthesis of proteins in the cell. The small ribosomal subunit (SSU) binds messenger RNAs (mRNAs) and translates the encoded message by selecting cognate aminoacyl-transfer RNA (tRNA) molecules. The large subunit (LSU) contains the ribosomal catalytic site termed the peptidyl transferase center (PTC), which catalyzes the formation of peptide bonds, thereby polymerizing the amino acids delivered by tRNAs into a polypeptide chain. The nascent polypeptides leave the ribosome through a tunnel in the LSU and interact with protein factors that function in enzymatic processing, targeting, and the membrane insertion of nascent chains at the exit of the ribosomal tunnel. In Schizosaccharomyces pombe (strain 972 / ATCC 24843) (Fission yeast), this protein is Large ribosomal subunit protein P2C (rpp203).